A 962-amino-acid chain; its full sequence is Alpha-glucan phosphorylase 1 (962 aa).

The N-terminal 63 residues, Met-1–Ser-63, are a transit peptide targeting the chloroplast. The interval Ala-525–Pro-552 is disordered. Residue Lys-808 is modified to N6-(pyridoxal phosphate)lysine.

The protein belongs to the glycogen phosphorylase family. Pyridoxal 5'-phosphate is required as a cofactor.

It is found in the plastid. The protein resides in the chloroplast stroma. It catalyses the reaction [(1-&gt;4)-alpha-D-glucosyl](n) + phosphate = [(1-&gt;4)-alpha-D-glucosyl](n-1) + alpha-D-glucose 1-phosphate. Functionally, phosphorylase is an important allosteric enzyme in carbohydrate metabolism. Enzymes from different sources differ in their regulatory mechanisms and in their natural substrates. However, all known phosphorylases share catalytic and structural properties. May be not required for the degradation of starch, but the phosphorolysis of starch may play an important role in water stress tolerance. The protein is Alpha-glucan phosphorylase 1 (PHS1) of Arabidopsis thaliana (Mouse-ear cress).